A 249-amino-acid chain; its full sequence is Cytochrome c oxidase subunit 2 (249 aa).

A signal peptide spans 1–13; that stretch reads MLNLFQIMNMINN. Over 14 to 40 the chain is Mitochondrial intermembrane; sequence DVPTPYGFYFQDSATPNQEGILELHDN. Residues 41–62 form a helical membrane-spanning segment; the sequence is IMFYLVVILGLVSWMLFTIVRT. At 63–80 the chain is on the mitochondrial matrix side; that stretch reads YSRNPMAYKYIKHGQTIE. The chain crosses the membrane as a helical span at residues 81 to 105; sequence IIWKIFPAVILLTIAFPSFILLYLC. The Mitochondrial intermembrane portion of the chain corresponds to 106-249; it reads DEVISPAMTI…PKFLEWLNEQ (144 aa). Cu cation contacts are provided by H184, C219, E221, C223, H227, and M230. E221 contacts Mg(2+).

This sequence belongs to the cytochrome c oxidase subunit 2 family. In terms of assembly, component of the cytochrome c oxidase (complex IV, CIV), a multisubunit enzyme composed of a catalytic core of 3 subunits and several supernumerary subunits. The complex exists as a monomer or a dimer and forms supercomplexes (SCs) in the inner mitochondrial membrane with ubiquinol-cytochrome c oxidoreductase (cytochrome b-c1 complex, complex III, CIII). It depends on Cu cation as a cofactor. In terms of processing, the signal sequence of COX2 is processed by IMP1.

It localises to the mitochondrion inner membrane. The enzyme catalyses 4 Fe(II)-[cytochrome c] + O2 + 8 H(+)(in) = 4 Fe(III)-[cytochrome c] + 2 H2O + 4 H(+)(out). Functionally, component of the cytochrome c oxidase, the last enzyme in the mitochondrial electron transport chain which drives oxidative phosphorylation. The respiratory chain contains 3 multisubunit complexes succinate dehydrogenase (complex II, CII), ubiquinol-cytochrome c oxidoreductase (cytochrome b-c1 complex, complex III, CIII) and cytochrome c oxidase (complex IV, CIV), that cooperate to transfer electrons derived from NADH and succinate to molecular oxygen, creating an electrochemical gradient over the inner membrane that drives transmembrane transport and the ATP synthase. Cytochrome c oxidase is the component of the respiratory chain that catalyzes the reduction of oxygen to water. Electrons originating from reduced cytochrome c in the intermembrane space (IMS) are transferred via the dinuclear copper A center (CU(A)) of subunit 2 and heme A of subunit 1 to the active site in subunit 1, a binuclear center (BNC) formed by heme A3 and copper B (CU(B)). The BNC reduces molecular oxygen to 2 water molecules using 4 electrons from cytochrome c in the IMS and 4 protons from the mitochondrial matrix. This is Cytochrome c oxidase subunit 2 (COX2) from Maudiozyma exigua (Yeast).